A 192-amino-acid polypeptide reads, in one-letter code: Epididymal-specific lipocalin-5 (192 aa).

A signal peptide spans 1 to 26 (MCSVARHMESIMLFTLLGLCVGLAAG). A disulfide bond links Cys89 and Cys183.

This sequence belongs to the calycin superfamily. Lipocalin family. In terms of processing, 2 different forms with differently processed N-termini exist. As to expression, epididymal fluid of the caudal and corpus regions (at protein level).

It is found in the secreted. In terms of biological role, associates with spermatozoa in the epididymal fluid but does not bind tightly to them. Binds both all-trans and 13-cis retinoic acid. May act as a retinoid carrier protein which is required for epididymal function and/or sperm maturation. The chain is Epididymal-specific lipocalin-5 from Mus musculus (Mouse).